Reading from the N-terminus, the 220-residue chain is Large ribosomal subunit protein bL9 (220 aa).

The span at 167-184 (AAAEVEQAEDVAAAEQQD) shows a compositional bias: low complexity. The segment at 167-220 (AAAEVEQAEDVAAAEQQDSSPVDDHADDADGVADGEGRDEGAGDASDEEEMPST) is disordered. Acidic residues predominate over residues 211 to 220 (ASDEEEMPST).

This sequence belongs to the bacterial ribosomal protein bL9 family.

In terms of biological role, binds to the 23S rRNA. This chain is Large ribosomal subunit protein bL9, found in Anaplasma marginale (strain Florida).